The following is a 1080-amino-acid chain: Serine/threonine-protein kinase KIC1 (1080 aa).

The Protein kinase domain maps to 23 to 276 (FKRTEVIGRG…ADDLLKSKFI (254 aa)). Residues 29-37 (IGRGKFGVV) and lysine 52 each bind ATP. Residue aspartate 144 is the Proton acceptor of the active site. Disordered regions lie at residues 308 to 347 (EGSI…EIKR), 615 to 760 (KARS…LAPP), 787 to 831 (STLN…LQMP), and 901 to 956 (SQSI…NTGN). Over residues 312-326 (PENEPSKPSEAPKPS) the composition is skewed to low complexity. The segment covering 615–626 (KARSSTVTAGTP) has biased composition (polar residues). Residues 627–638 (SSSSSIQYKSPS) show a composition bias toward low complexity. Over residues 656–673 (STITNQKLGSAVASNSGI) the composition is skewed to polar residues. Positions 674–689 (SSTPNNSNNYNNNTDS) are enriched in low complexity. Residues 693–726 (RGSSGSNTANSTQMGITNPGNVTKLSTHKASSPS) are compositionally biased toward polar residues. Serine 735 is subject to Phosphoserine. Over residues 743–756 (SPTQNIGHNSTHTN) the composition is skewed to polar residues. Low complexity predominate over residues 787-807 (STLNTISGNSSNNLTSSNYFS). Over residues 808–821 (NEKEGSRVNGDFKR) the composition is skewed to basic and acidic residues. The span at 901–913 (SQSISNRKNSSAS) shows a compositional bias: polar residues. Low complexity predominate over residues 918 to 956 (NILGSSVSGNVSGIGNNNVGSNNNSGPNNSVPLSANTGN).

It belongs to the protein kinase superfamily. Ser/Thr protein kinase family. As to quaternary structure, interacts with CDC31.

The catalysed reaction is L-seryl-[protein] + ATP = O-phospho-L-seryl-[protein] + ADP + H(+). It catalyses the reaction L-threonyl-[protein] + ATP = O-phospho-L-threonyl-[protein] + ADP + H(+). In terms of biological role, protein kinase involved in morphogenesis and cell integrity. This is Serine/threonine-protein kinase KIC1 (KIC1) from Saccharomyces cerevisiae (strain ATCC 204508 / S288c) (Baker's yeast).